A 684-amino-acid polypeptide reads, in one-letter code: Soluble guanylate cyclase gcy-32 (684 aa).

H105 is a heme binding site. Residues 396–432 (DVEVNLQLEANNEQLETMTRELELERQKTDSILKDML) are a coiled coil. A Guanylate cyclase domain is found at 454-582 (TVMFCDLPAF…ETVTLASQME (129 aa)). Mg(2+) contacts are provided by D459 and D503.

This sequence belongs to the adenylyl cyclase class-4/guanylyl cyclase family. As to quaternary structure, heterodimer; with other soluble guanylate cyclases. Heme serves as cofactor. As to expression, expressed in a small number of neurons, corresponding to URX, AQR and PQR neurons.

The protein resides in the cytoplasm. It catalyses the reaction GTP = 3',5'-cyclic GMP + diphosphate. May be regulated by molecular oxygen. Probably not activated by nitric oxide (NO). Its function is as follows. Synthesizes cyclic GMP (cGMP) from GTP. Influences aerotaxis responses, aggregation and bordering behaviors (gathering around the edge of a bacterial lawn) in combination with other soluble guanylate cyclases. This Caenorhabditis elegans protein is Soluble guanylate cyclase gcy-32 (gcy-32).